A 345-amino-acid chain; its full sequence is Methionine import ATP-binding protein MetN 4 (345 aa).

The ABC transporter domain occupies 2 to 241 (IELTNITKTF…PQLRTTKRFV (240 aa)). 38–45 (GYSGAGKS) is an ATP binding site.

Belongs to the ABC transporter superfamily. Methionine importer (TC 3.A.1.24) family. The complex is composed of two ATP-binding proteins (MetN), two transmembrane proteins (MetI) and a solute-binding protein (MetQ).

The protein localises to the cell membrane. The catalysed reaction is L-methionine(out) + ATP + H2O = L-methionine(in) + ADP + phosphate + H(+). The enzyme catalyses D-methionine(out) + ATP + H2O = D-methionine(in) + ADP + phosphate + H(+). In terms of biological role, part of the ABC transporter complex MetNIQ involved in methionine import. Responsible for energy coupling to the transport system. The sequence is that of Methionine import ATP-binding protein MetN 4 from Oceanobacillus iheyensis (strain DSM 14371 / CIP 107618 / JCM 11309 / KCTC 3954 / HTE831).